Reading from the N-terminus, the 152-residue chain is Cell division protein SepF (152 aa).

Positions 23–32 are enriched in basic and acidic residues; the sequence is EVAREPEPMQ. A disordered region spans residues 23 to 42; that stretch reads EVAREPEPMQKKTKKEKPSK.

This sequence belongs to the SepF family. In terms of assembly, homodimer. Interacts with FtsZ.

Its subcellular location is the cytoplasm. Cell division protein that is part of the divisome complex and is recruited early to the Z-ring. Probably stimulates Z-ring formation, perhaps through the cross-linking of FtsZ protofilaments. Its function overlaps with FtsA. This is Cell division protein SepF from Listeria welshimeri serovar 6b (strain ATCC 35897 / DSM 20650 / CCUG 15529 / CIP 8149 / NCTC 11857 / SLCC 5334 / V8).